A 1047-amino-acid polypeptide reads, in one-letter code: Carbamoyl phosphate synthase large chain (1047 aa).

Residues methionine 1–aspartate 398 are carboxyphosphate synthetic domain. ATP-binding residues include arginine 129, arginine 169, glycine 175, glycine 176, glutamate 208, leucine 210, glutamate 215, glycine 241, valine 242, histidine 243, glutamine 284, and glutamate 296. One can recognise an ATP-grasp 1 domain in the interval tyrosine 133–alanine 325. Glutamine 284, glutamate 296, and asparagine 298 together coordinate Mg(2+). Residues glutamine 284, glutamate 296, and asparagine 298 each contribute to the Mn(2+) site. Positions asparagine 399–threonine 539 are oligomerization domain. The segment at proline 540–isoleucine 916 is carbamoyl phosphate synthetic domain. Residues serine 665–isoleucine 854 enclose the ATP-grasp 2 domain. ATP is bound by residues arginine 701, lysine 738, leucine 740, glutamate 745, glycine 770, valine 771, histidine 772, serine 773, glutamine 813, and glutamate 825. 3 residues coordinate Mg(2+): glutamine 813, glutamate 825, and asparagine 827. Glutamine 813, glutamate 825, and asparagine 827 together coordinate Mn(2+). The region spanning lysine 910–serine 1047 is the MGS-like domain. The tract at residues isoleucine 916 to serine 1047 is allosteric domain.

It belongs to the CarB family. As to quaternary structure, composed of two chains; the small (or glutamine) chain promotes the hydrolysis of glutamine to ammonia, which is used by the large (or ammonia) chain to synthesize carbamoyl phosphate. Tetramer of heterodimers (alpha,beta)4. Requires Mg(2+) as cofactor. It depends on Mn(2+) as a cofactor.

It catalyses the reaction hydrogencarbonate + L-glutamine + 2 ATP + H2O = carbamoyl phosphate + L-glutamate + 2 ADP + phosphate + 2 H(+). The catalysed reaction is hydrogencarbonate + NH4(+) + 2 ATP = carbamoyl phosphate + 2 ADP + phosphate + 2 H(+). The protein operates within amino-acid biosynthesis; L-arginine biosynthesis; carbamoyl phosphate from bicarbonate: step 1/1. It participates in pyrimidine metabolism; UMP biosynthesis via de novo pathway; (S)-dihydroorotate from bicarbonate: step 1/3. Its function is as follows. Large subunit of the glutamine-dependent carbamoyl phosphate synthetase (CPSase). CPSase catalyzes the formation of carbamoyl phosphate from the ammonia moiety of glutamine, carbonate, and phosphate donated by ATP, constituting the first step of 2 biosynthetic pathways, one leading to arginine and/or urea and the other to pyrimidine nucleotides. The large subunit (synthetase) binds the substrates ammonia (free or transferred from glutamine from the small subunit), hydrogencarbonate and ATP and carries out an ATP-coupled ligase reaction, activating hydrogencarbonate by forming carboxy phosphate which reacts with ammonia to form carbamoyl phosphate. The sequence is that of Carbamoyl phosphate synthase large chain from Thermoplasma acidophilum (strain ATCC 25905 / DSM 1728 / JCM 9062 / NBRC 15155 / AMRC-C165).